Here is a 417-residue protein sequence, read N- to C-terminus: MSSKYPRSVRRCLPLCALTLEAALILLFYFFTHYDASLEDQKGLVASYQVGQDLTVMAALGLGFLTSNFRRHSWSSVAFNLFMLALGVQWAILLDGFLSQFPPGKVVITLFSIRLATMSAMSVLISAGAVLGKVNLAQLVVMVLVEVTALGTLRMVISNIFNTDYHMNLRHFYVFAAYFGLTVAWCLPKPLPKGTEDNDQRATIPSLSAMLGALFLWMFWPSVNSALLRSPIQRKNAMFNTYYALAVSVVTAISGSSLAHPQRKISMTYVHSAVLAGGVAVGTSCHLIPSPWLAMVLGLVAGLISIGGAKCLPVCCNRVLGIHHISVMHSIFSLLGLLGEITYIVLLVLHTVWNGNGMIGFQVLLSIGELSLAIVIALTSGLLTGLLLNLKIWKAPHVAKYFDDQVFWKFPHLAVGF.

11 helical membrane passes run Cys-12–Thr-32, Leu-44–Phe-64, Val-77–Phe-97, Ile-125–Val-145, Phe-172–Pro-192, Thr-203–Val-223, Met-238–Leu-258, Ile-265–Cys-285, Leu-287–Gly-307, Ile-331–Thr-351, and Met-358–Leu-378.

Belongs to the ammonium transporter (TC 2.A.49) family. Rh subfamily. In terms of assembly, heterotrimer; a RHCE monomer interacts with a RHAG homodimer. Component of the ankyrin-1 complex in the erythrocyte, composed of ANK1, RHCE, RHAG, SLC4A1, EPB42, GYPA, GYPB and AQP1. Interacts (via the N- and C-terminal) with ANK1 (via ANk 1-5 repeats); mediates the primary membrane attachment site for ANK1. Restricted to tissues or cell lines expressing erythroid characters. Isoform 4g and isoform RhPI-Alpha are expressed in immature erythroblasts but not in mature erythroblasts.

The protein localises to the membrane. In terms of biological role, component of the ankyrin-1 complex, a multiprotein complex involved in the stability and shape of the erythrocyte membrane. Mediates the primary membrane attachment site for ANK1 when associated with RHAG. May participate in the ammonium and carbon dioxide transport through the heterotrimer form. The polypeptide is Blood group Rh(CE) polypeptide (Homo sapiens (Human)).